The chain runs to 452 residues: Keratin, type II cytoskeletal 80 (452 aa).

Residues 1 to 82 (MAYRSCVVGF…DPAVQQQKNQ (82 aa)) form a head region. Ser45 is subject to Phosphoserine. A coil 1A region spans residues 82 to 118 (QEKEEMKALNDKFASLIGKVQALEQRNQLLETRWSFL). The region spanning 83 to 394 (EKEEMKALND…KLMEGEESRM (312 aa)) is the IF rod domain. A linker 1 region spans residues 119–135 (QGQGSATFDLSHHYETF). Residues 136 to 227 (QGRLQEELRK…TVYEQELKDL (92 aa)) are coil 1B. The interval 228 to 251 (TAQVKDVSVTVGLDSRCHIDLSGI) is linker 12. Residues 252-390 (VEEVKAQYDA…ATYHKLMEGE (139 aa)) are coil 2. Positions 391 to 452 (ESRMDLPSAT…YLSQESEASE (62 aa)) are tail. Positions 412 to 452 (TASKSGLTKTSSRKKKNRRGPVIKITEMSEKYLSQESEASE) are disordered. A compositionally biased stretch (basic residues) spans 422 to 432 (SSRKKKNRRGP). Positions 443–452 (YLSQESEASE) are enriched in polar residues.

This sequence belongs to the intermediate filament family. In terms of assembly, heterotetramer of two type I and two type II keratins.

This Mus musculus (Mouse) protein is Keratin, type II cytoskeletal 80 (Krt80).